A 693-amino-acid chain; its full sequence is Sodium-dependent dopamine transporter (693 aa).

Topologically, residues 1 to 56 (MSEGRCSVAHMSSVVAPAKEANAMGPKAVELVLVKEQNGVQLTNSTLLNPPQSPTE) are cytoplasmic. Residues 57–95 (AQDRETWSKKADFLLSVIGFAVDLANVWRFPYLCYKNGG) traverse the membrane as a discontinuously helical segment. Na(+)-binding residues include Gly-75, Ala-77, Val-78, Asp-79, and Asn-82. Position 79 (Asp-79) interacts with dopamine. The next 2 membrane-spanning stretches (helical) occupy residues 96–127 (GAFLVPYLFFMVVAGVPLFYMELALGQFNREG) and 128–171 (AAGV…LSSF). Dopamine contacts are provided by Ser-149 and Gly-153. The Extracellular segment spans residues 172-233 (TTELPWTHCN…SQGIDDLGPP (62 aa)). A disulfide bridge links Cys-180 with Cys-189. 3 N-linked (GlcNAc...) asparagine glycosylation sites follow: Asn-181, Asn-196, and Asn-202. 2 helical membrane-spanning segments follow: residues 234–253 (RWQLTSCLVLVIVLLYFSLW) and 254–284 (KGVKTSGKVVWITATMPYVVLFALLLRGITL). At 285 to 303 (PGAVDAIRAYLSVDFHRLC) the chain is on the extracellular side. The chain crosses the membrane as a discontinuously helical span at residues 304–332 (EASVWIDAAIQICFSLGVGLGVLIAFSSY). Gln-314 serves as a coordination point for chloride. Dopamine is bound at residue Phe-317. Na(+)-binding residues include Ser-318 and Asn-350. Ser-318 provides a ligand contact to chloride. Residues 333 to 373 (NKFTNNCYRDAIITTSVNSLTSFSSGFVVFSFLGYMAQKHS) form a helical membrane-spanning segment. Residue Ser-354 coordinates chloride. Over 374–397 (VPIGDVAKDGPGLIFIIYPEALAT) the chain is Extracellular. A run of 3 helical transmembrane segments spans residues 398–439 (LPLS…QLLH), 440–463 (RHRELFTLLVVLATFLLSLFCVTN), and 464–496 (GGIYVFTLLDHFAAGTSILFGVLMEVIGVAWFY). 3 residues coordinate Na(+): Leu-415, Asp-418, and Ser-419. 2 residues coordinate dopamine: Ser-419 and Ala-420. Topologically, residues 497 to 513 (GVWQFSDDIKQMTGRRP) are cytoplasmic. A helical transmembrane segment spans residues 514–539 (SLYWRLCWKFVSPCFLLFVVVVSIAT). Topologically, residues 540-550 (FRPPHYGAYVF) are extracellular. A helical membrane pass occupies residues 551 to 580 (PEWATALGWAIAASSMSVVPIYAAYKLCSL). The tract at residues 558 to 587 (GWAIAASSMSVVPIYAAYKLCSLPGSSREK) is interaction with TGFB1I1. Over 581–693 (PGSSREKLAY…VESTGLCSVY (113 aa)) the chain is Cytoplasmic.

This sequence belongs to the sodium:neurotransmitter symporter (SNF) (TC 2.A.22) family. SLC6A3 subfamily. Monomer. Homooligomer; disulfide-linked. Interacts with PRKCABP and TGFB1I1. Interacts (via N-terminus) with SYNGR3 (via N-terminus). Interacts with SLC18A2. Interacts with TOR1A (ATP-bound); TOR1A regulates SLC6A3 subcellular location. Interacts with alpha-synuclein/SNCA. Interacts with SEPTIN4. As to expression, expressed in the neurons of the substantia nigra of the brain.

Its subcellular location is the cell membrane. It is found in the cell projection. The protein resides in the neuron projection. It localises to the axon. It catalyses the reaction dopamine(out) + chloride(out) + Na(+)(out) = dopamine(in) + chloride(in) + Na(+)(in). The enzyme catalyses (R)-noradrenaline(out) + chloride(out) + Na(+)(out) = (R)-noradrenaline(in) + chloride(in) + Na(+)(in). The catalysed reaction is dopamine(out) + chloride(out) + 2 Na(+)(out) = dopamine(in) + chloride(in) + 2 Na(+)(in). Its activity is regulated as follows. Inhibited by GBR 12909 dihydrochloride, amphetamine and cocaine. Inhibited by zinc ions. Mediates sodium- and chloride-dependent transport of dopamine. Also mediates sodium- and chloride-dependent transport of norepinephrine (also known as noradrenaline). Regulator of light-dependent retinal hyaloid vessel regression, downstream of OPN5 signaling. This chain is Sodium-dependent dopamine transporter (SLC6A3), found in Bos taurus (Bovine).